A 493-amino-acid chain; its full sequence is Alpha-amylase-related protein (493 aa).

Positions 1-19 are cleaved as a signal peptide; sequence MFKLALTLTLCLAGSLSLA. Gln-20 is modified (pyrrolidone carboxylic acid). A disulfide bridge connects residues Cys-47 and Cys-103. Residues Asn-117, Gln-168, and Asp-177 each coordinate Ca(2+). The cysteines at positions 156 and 170 are disulfide-linked. Arg-205 is a binding site for chloride. Asp-207 functions as the Nucleophile in the catalytic mechanism. His-211 is a Ca(2+) binding site. The Proton donor role is filled by Glu-244. Asn-307 and Arg-342 together coordinate chloride. 3 disulfides stabilise this stretch: Cys-375/Cys-381, Cys-417/Cys-440, and Cys-447/Cys-459.

The protein belongs to the glycosyl hydrolase 13 family. Monomer. It depends on Ca(2+) as a cofactor. Chloride is required as a cofactor.

Its subcellular location is the secreted. It carries out the reaction Endohydrolysis of (1-&gt;4)-alpha-D-glucosidic linkages in polysaccharides containing three or more (1-&gt;4)-alpha-linked D-glucose units.. This chain is Alpha-amylase-related protein (Amyrel), found in Drosophila teissieri (Fruit fly).